Consider the following 419-residue polypeptide: tRNA(Met) cytidine acetate ligase (419 aa).

Residues 7 to 20 (ITEYNPFHNGHLHH), G101, N163, and R188 each bind ATP.

The protein belongs to the TmcAL family.

The protein localises to the cytoplasm. It carries out the reaction cytidine(34) in elongator tRNA(Met) + acetate + ATP = N(4)-acetylcytidine(34) in elongator tRNA(Met) + AMP + diphosphate. Catalyzes the formation of N(4)-acetylcytidine (ac(4)C) at the wobble position of elongator tRNA(Met), using acetate and ATP as substrates. First activates an acetate ion to form acetyladenylate (Ac-AMP) and then transfers the acetyl group to tRNA to form ac(4)C34. The chain is tRNA(Met) cytidine acetate ligase from Syntrophotalea carbinolica (strain DSM 2380 / NBRC 103641 / GraBd1) (Pelobacter carbinolicus).